The following is a 2426-amino-acid chain: Protein SON (2426 aa).

An N-acetylalanine modification is found at A2. K16 is modified (N6-acetyllysine). A compositionally biased stretch (polar residues) spans 24 to 42 (LSSGRNEGQLNGETNTPIE). The tract at residues 24-56 (LSSGRNEGQLNGETNTPIEGNQAGDAAASARSL) is disordered. Residue K64 forms a Glycyl lysine isopeptide (Lys-Gly) (interchain with G-Cter in SUMO2) linkage. Basic and acidic residues predominate over residues 77-88 (LRYKPDLKEGSR). Residues 77-155 (LRYKPDLKEG…GNIDLESDSF (79 aa)) form a disordered region. S94 is subject to Phosphoserine. Positions 106–130 (KKSKKHKKHKNKKKKKKKEKEKKYK) are enriched in basic residues. Positions 131-146 (RQPEESESKTKSHDDG) are enriched in basic and acidic residues. Residues S142, S152, S154, S160, and S283 each carry the phosphoserine modification. Residue K288 is modified to N6-acetyllysine. Positions 305–328 (TLVVSSETPTEVYPEPSTSTTMDF) are disordered. A Phosphothreonine modification is found at T400. The tract at residues 406–442 (PGPSATPVPELPGPLSTPVPELPGPPATAVPELPGPS) is disordered. The span at 409–442 (SATPVPELPGPLSTPVPELPGPPATAVPELPGPS) shows a compositional bias: pro residues. A 17 X 10 AA tandem repeats of L-A-[ST]-[NSG]-[TS]-MDSQM region spans residues 726–895 (LASNTMDSQM…LASGTMDAQM (170 aa)). The tract at residues 912–988 (DPYRLAQDPY…IAPRPYRLAP (77 aa)) is 11 X 7 AA tandem repeats of [DR]-P-Y-R-[LI][AG][QHP]. R950 carries the omega-N-methylarginine modification. T959 is modified (phosphothreonine). S998 is modified (phosphoserine). 14 repeat units span residues 1006–1011 (ERSMMS), 1014–1019 (ERSMMS), 1021–1026 (ERSMMS), 1030–1035 (ERSMMS), 1038–1043 (ERSMMS), 1046–1051 (ERSMMS), 1055–1060 (ERSMMS), 1063–1068 (ERSMMS), 1071–1076 (ERSMMS), 1080–1085 (DRSMMS), 1089–1094 (DRSMMS), 1100–1105 (DRSMMS), 1111–1116 (DRSMMS), and 1121–1126 (DRSMMS). The segment at 1006-1126 (ERSMMSSYER…SYTADRSMMS (121 aa)) is 14 X 6 AA repeats of [ED]-R-S-M-M-S. R1007 is subject to Asymmetric dimethylarginine. R1022 bears the Asymmetric dimethylarginine mark. S1035 and S1043 each carry phosphoserine. Residues S1060 and S1068 each carry the phosphoserine modification. Position 1082 is a phosphoserine (S1082). Residues 1144–1236 (YMVPPLPPEE…PTDYSVSASD (93 aa)) are disordered. The tract at residues 1147 to 1179 (PPLPPEEPPTMPPLPPEEPPMTPPLPPEEPPEG) is 3 X 11 AA tandem repats of P-P-L-P-P-E-E-P-P-[TME]-[MTG]. Residues 1147–1180 (PPLPPEEPPTMPPLPPEEPPMTPPLPPEEPPEGP) show a composition bias toward pro residues. A compositionally biased stretch (polar residues) spans 1186-1196 (QSALTAENTWP). The segment covering 1198–1224 (EVPSSPSEESVSQPEPPVSQSEISEPS) has biased composition (low complexity). The interval 1359 to 1390 (VLESSAVTVLESSTVTVLESSTVTVLEPSVVT) is 4 X 8 AA tandem repeats of V-L-E-SS-[AVT]-VT. Phosphoserine occurs at positions 1556 and 1651. The interval 1645–1722 (TSPSGGSEAD…KETLPDSGFS (78 aa)) is disordered. A compositionally biased stretch (basic and acidic residues) spans 1677–1689 (KDTEEPLPVKESD). Residues S1697, S1701, S1747, S1759, S1766, S1769, S1782, and S1783 each carry the phosphoserine modification. Residues 1754 to 2054 (GPLLASDVGR…RSPKRLTDLD (301 aa)) form a disordered region. Basic and acidic residues-rich tracts occupy residues 1790-1801 (YEIFVKVKDTHE), 1809-1822 (RDKGEKEKKRDSSL), and 1830-1845 (KSSEHKSRKRTSESRS). Composition is skewed to basic residues over residues 1846–1909 (RARK…RKRS) and 1917–1948 (TVRARSRTPSRRSRSHTPSRRRRSRSVGRRRS). 9 tandem repeats follow at residues 1925-1931 (PSRRSRS), 1934-1952 (PSRRRRSRSVGRRRSFSIS), 1953-1959 (PSRRSRT), 1960-1966 (PSRRSRT), 1967-1973 (PSRRSRT), 1974-1980 (PSRRSRT), 1981-1987 (PSRRSRT), 1988-1994 (PSRRSRT), and 1995-2013 (PSRRRRSRSVVRRRSFSIS). Residues 1925-1994 (PSRRSRSHTP…SRTPSRRSRT (70 aa)) are 7 X 7 AA repeats of P-S-R-R-S-R-[TS]. The 2 X 19 AA repeats of P-S-R-R-R-R-S-R-S-V-V-R-R-R-S-F-S-I-S stretch occupies residues 1934–2013 (PSRRRRSRSV…VVRRRSFSIS (80 aa)). Phosphoserine is present on residues S1948, S1950, and S1952. Basic residues predominate over residues 1955–2009 (RRSRTPSRRSRTPSRRSRTPSRRSRTPSRRSRTPSRRSRTPSRRRRSRSVVRRRS). 5 positions are modified to phosphoserine: S2009, S2011, S2013, S2029, and S2031. The interval 2013-2039 (SPVRLRRSRTPLRRRFSRSPIRRKRSR) is 3 X tandem repeats of [ST]-P-[VLI]-R-[RL]-[RK]-[RF]-S-R. Over residues 2016–2038 (RLRRSRTPLRRRFSRSPIRRKRS) the composition is skewed to basic residues. Positions 2039–2054 (RSSERGRSPKRLTDLD) are enriched in basic and acidic residues. Position 2055 is an N6-acetyllysine; alternate (K2055). K2055 is covalently cross-linked (Glycyl lysine isopeptide (Lys-Gly) (interchain with G-Cter in SUMO2); alternate). K2092 participates in a covalent cross-link: Glycyl lysine isopeptide (Lys-Gly) (interchain with G-Cter in SUMO2). Phosphoserine is present on S2129. K2149 participates in a covalent cross-link: Glycyl lysine isopeptide (Lys-Gly) (interchain with G-Cter in SUMO2). Phosphothreonine is present on T2163. Residues 2200-2220 (KNGEENKDDDNVFSSNLPSEP) form a disordered region. S2238 carries the phosphoserine modification. The 47-residue stretch at 2305-2351 (TGGMGAVLMRKMGWREGEGLGKNKEGNKEPILVDFKTDRKGLVAVGE) folds into the G-patch domain. In terms of domain architecture, DRBM spans 2371–2426 (HPVSALMEICNKRRWQPPEFLLVHDSGPDHRKHFLFRVLRNGALTRPNCMFFLNRY).

In terms of assembly, interacts with SRSF2. Associates with the spliceosome. Interacts with the AML1-MTG8 (AML1-ETO) fusion protein, possibly leading to trigger signals inhibiting leukemogenesis. Interacts with USH1G. In terms of tissue distribution, widely expressed, with the higher expression seen in leukocyte and heart.

The protein localises to the nucleus speckle. Its function is as follows. RNA-binding protein that acts as a mRNA splicing cofactor by promoting efficient splicing of transcripts that possess weak splice sites. Specifically promotes splicing of many cell-cycle and DNA-repair transcripts that possess weak splice sites, such as TUBG1, KATNB1, TUBGCP2, AURKB, PCNT, AKT1, RAD23A, and FANCG. Probably acts by facilitating the interaction between Serine/arginine-rich proteins such as SRSF2 and the RNA polymerase II. Also binds to DNA; binds to the consensus DNA sequence: 5'-GA[GT]AN[CG][AG]CC-3'. May indirectly repress hepatitis B virus (HBV) core promoter activity and transcription of HBV genes and production of HBV virions. Essential for correct RNA splicing of multiple genes critical for brain development, neuronal migration and metabolism, including TUBG1, FLNA, PNKP, WDR62, PSMD3, PCK2, PFKL, IDH2, and ACY1. The protein is Protein SON (SON) of Homo sapiens (Human).